A 347-amino-acid chain; its full sequence is Phenylalanine--tRNA ligase alpha subunit (347 aa).

Position 265 (Glu-265) interacts with Mg(2+).

Belongs to the class-II aminoacyl-tRNA synthetase family. Phe-tRNA synthetase alpha subunit type 1 subfamily. In terms of assembly, tetramer of two alpha and two beta subunits. Requires Mg(2+) as cofactor.

The protein resides in the cytoplasm. The enzyme catalyses tRNA(Phe) + L-phenylalanine + ATP = L-phenylalanyl-tRNA(Phe) + AMP + diphosphate + H(+). The protein is Phenylalanine--tRNA ligase alpha subunit of Mycolicibacterium gilvum (strain PYR-GCK) (Mycobacterium gilvum (strain PYR-GCK)).